Here is a 213-residue protein sequence, read N- to C-terminus: MAAPAVSGLSRQVRCFSTSVVRPFAKLVRPPVQVYGIEGRYATALYSAASKQNKLEQVEKELLRVAQILKEPKVAASVLNPYVKRSIKVKSLNDITAKERFSPLTTNLINLLAENGRLSNTQGVVSAFSTMMSVHRGEVPCTVTSASPLEEATLSELKTVLKSFLSQGQVLKLEAKTDPSILGGMIVRIGEKYVDMSVKTKIQKLGRAMREIV.

Residues 1 to 23 constitute a mitochondrion transit peptide; sequence MAAPAVSGLSRQVRCFSTSVVRP. Residues 5-23 carry the SIFI-degron motif; it reads AVSGLSRQVRCFSTSVVRP. 4 positions are modified to N6-acetyllysine: K54, K60, K70, and K73. K90 is modified (N6-succinyllysine). 2 positions are modified to N6-acetyllysine; alternate: K158 and K162. An N6-succinyllysine; alternate mark is found at K158 and K162. K172, K176, and K192 each carry N6-acetyllysine. An N6-succinyllysine modification is found at K199.

It belongs to the ATPase delta chain family. As to quaternary structure, component of the ATP synthase complex composed at least of ATP5F1A/subunit alpha, ATP5F1B/subunit beta, ATP5MC1/subunit c (homooctomer), MT-ATP6/subunit a, MT-ATP8/subunit 8, ATP5ME/subunit e, ATP5MF/subunit f, ATP5MG/subunit g, ATP5MK/subunit k, ATP5MJ/subunit j, ATP5F1C/subunit gamma, ATP5F1D/subunit delta, ATP5F1E/subunit epsilon, ATP5PF/subunit F6, ATP5PB/subunit b, ATP5PD/subunit d, ATP5PO/subunit OSCP. ATP synthase complex consists of a soluble F(1) head domain (subunits alpha(3) and beta(3)) - the catalytic core - and a membrane F(0) domain - the membrane proton channel (subunits c, a, 8, e, f, g, k and j). These two domains are linked by a central stalk (subunits gamma, delta, and epsilon) rotating inside the F1 region and a stationary peripheral stalk (subunits F6, b, d, and OSCP). In terms of processing, acetylation at Lys-162 decreases ATP production. Deacetylated by SIRT3. Post-translationally, in response to mitochondrial stress, the precursor protein is ubiquitinated by the SIFI complex in the cytoplasm before mitochondrial import, leading to its degradation. Within the SIFI complex, UBR4 initiates ubiquitin chain that are further elongated or branched by KCMF1.

The protein resides in the mitochondrion. It localises to the mitochondrion inner membrane. Its function is as follows. Subunit OSCP, of the mitochondrial membrane ATP synthase complex (F(1)F(0) ATP synthase or Complex V) that produces ATP from ADP in the presence of a proton gradient across the membrane which is generated by electron transport complexes of the respiratory chain. ATP synthase complex consist of a soluble F(1) head domain - the catalytic core - and a membrane F(1) domain - the membrane proton channel. These two domains are linked by a central stalk rotating inside the F(1) region and a stationary peripheral stalk. During catalysis, ATP synthesis in the catalytic domain of F(1) is coupled via a rotary mechanism of the central stalk subunits to proton translocation. In vivo, can only synthesize ATP although its ATP hydrolase activity can be activated artificially in vitro. Part of the complex F(0) domain. Part of the complex F(0) domain and the peripheric stalk, which acts as a stator to hold the catalytic alpha(3)beta(3) subcomplex and subunit a/ATP6 static relative to the rotary elements. This chain is ATP synthase peripheral stalk subunit OSCP, mitochondrial, found in Homo sapiens (Human).